A 2957-amino-acid polypeptide reads, in one-letter code: Toxin PAU_02230 (2957 aa).

Residues 949–968 (TSVSPAETAQSTPEPLSDFA) are disordered. Positions 2115 to 2144 (EWFKHSETGLKGGGPIDDIRKYIARKSAIK) are membrane localization domain that interacts with the inner leaflet of the plasma membrane. The segment at 2115 to 2449 (EWFKHSETGL…TSTIVTPLAP (335 aa)) is tyrosine glycosyltransferase PaToxG. Residues 2169 to 2171 (IWI) and 2259 to 2260 (SD) contribute to the UDP-N-acetyl-alpha-D-glucosamine site. D2276 and D2278 together coordinate a divalent metal cation. The DxDD motif motif lies at 2276–2279 (DIDD). N2312 lines the UDP-N-acetyl-alpha-D-glucosamine pocket. Residues 2450-2672 (KTEMLPPVPS…NYSVNPTAEN (223 aa)) form a sseI-like deamidase PaToxD region. Catalysis depends on for deamidase activity residues C2509, H2547, and D2562. Positions 2667-2705 (NPTAENLSPPPPPPIPSHGQVPKTVTPPPPPMRSPLSLS) are disordered.

It depends on a divalent metal cation as a cofactor.

It localises to the secreted. Its subcellular location is the host cell membrane. It catalyses the reaction L-tyrosyl-[protein] + UDP-N-acetyl-alpha-D-glucosamine = O-(N-acetyl-alpha-D-glucosaminyl)-L-tyrosyl-[protein] + UDP + H(+). The enzyme catalyses L-glutaminyl-[protein] + H2O = L-glutamyl-[protein] + NH4(+). Toxin that acts on host cells by modifying Rho proteins by tyrosine GlcNAcylation and heterotrimeric G alpha proteins by deamidation. Catalyzes the mono-O-GlcNAcylation of small GTPases of the Rho family (RhoA, RhoB, RhoC, Rac1, Rac2, Rac3, Cdc42) in eukaryotic host cells at the conserved tyrosine residue located in the switch I region (Tyr-32/34), using UDP-N-acetylglucosamine (UDP-GlcNAc) as the sugar donor; other GTPases of the Rho, Ras or Rab families are not substrates. Tyrosine glycosylation inhibits Rho activation and prevents interaction with downstream effectors, resulting in actin disassembly, inhibition of phagocytosis, cell rounding, and toxicity toward insects and mammalian cells. Also catalyzes the deamidation of the catalytic glutamine in heterotrimeric G alpha proteins (Gi, Gq/11), which blocks GTP hydrolysis and arrests the G proteins in a permanent active state leading to activation of Rho GTPases. Thus, PaTox hijacks host GTPase signaling in a bidirectional manner by deamidation-induced activation and glycosylation-induced inactivation of GTPases. The protein is Toxin PAU_02230 of Photorhabdus asymbiotica subsp. asymbiotica (strain ATCC 43949 / 3105-77) (Xenorhabdus luminescens (strain 2)).